A 362-amino-acid chain; its full sequence is Chalcone synthase A (362 aa).

Cys168 is an active-site residue.

It belongs to the thiolase-like superfamily. Chalcone/stilbene synthases family.

The enzyme catalyses (E)-4-coumaroyl-CoA + 3 malonyl-CoA + 3 H(+) = 2',4,4',6'-tetrahydroxychalcone + 3 CO2 + 4 CoA. Its pathway is secondary metabolite biosynthesis; flavonoid biosynthesis. The primary product of this enzyme is 4,2',4',6'-tetrahydroxychalcone (also termed naringenin-chalcone or chalcone) which can under specific conditions spontaneously isomerize into naringenin. The polypeptide is Chalcone synthase A (CHSA) (Ipomoea triloba (Trilobed morning glory)).